Consider the following 621-residue polypeptide: tRNA uridine 5-carboxymethylaminomethyl modification enzyme MnmG (621 aa).

Residue 9-14 (GGGHAG) coordinates FAD. Residue 270-284 (GPRYCPSIEDKIVKF) participates in NAD(+) binding.

This sequence belongs to the MnmG family. Homodimer. Heterotetramer of two MnmE and two MnmG subunits. It depends on FAD as a cofactor.

It is found in the cytoplasm. In terms of biological role, NAD-binding protein involved in the addition of a carboxymethylaminomethyl (cmnm) group at the wobble position (U34) of certain tRNAs, forming tRNA-cmnm(5)s(2)U34. This chain is tRNA uridine 5-carboxymethylaminomethyl modification enzyme MnmG, found in Borrelia garinii subsp. bavariensis (strain ATCC BAA-2496 / DSM 23469 / PBi) (Borreliella bavariensis).